A 908-amino-acid polypeptide reads, in one-letter code: Transcriptional repressor ILP1 (908 aa).

Disordered regions lie at residues 1–113 (MGSN…PQAG) and 238–277 (VGPR…EEDK). Residues 25 to 47 (ATPSSKPTSTLSSSKPKTLSASA) show a composition bias toward low complexity. The stretch at 426 to 453 (MQNKGSLIEEIEDQMKELNEKHALSILE) forms a coiled coil. Positions 513–530 (EFGRDENLQKRREVEQRA) are enriched in basic and acidic residues. The disordered stretch occupies residues 513–574 (EFGRDENLQK…ESDTETSAYK (62 aa)).

Belongs to the GCF family. As to quaternary structure, interacts with STIPL1/NTR1.

Its subcellular location is the nucleus. Its function is as follows. Transcriptional repressor regulating endoreduplication through control of A-type cyclins expression. Does not bind to promoter sequences (in vitro) and may act by interacting with tissue-specific transcription factors. Enhances the endocycle in endoreduplicating cells in seedlings. Required for efficient splicing. In Arabidopsis thaliana (Mouse-ear cress), this protein is Transcriptional repressor ILP1.